The following is a 1093-amino-acid chain: Error-prone DNA polymerase (1093 aa).

Residues 1–55 form a disordered region; sequence MGWFNGPPSWAEMERVLDSKPRRAGESAAPEPDGPLSRGRATYRPPDEGRAARSS. Positions 12–25 are enriched in basic and acidic residues; the sequence is EMERVLDSKPRRAG.

This sequence belongs to the DNA polymerase type-C family. DnaE2 subfamily.

It localises to the cytoplasm. The enzyme catalyses DNA(n) + a 2'-deoxyribonucleoside 5'-triphosphate = DNA(n+1) + diphosphate. Its function is as follows. DNA polymerase involved in damage-induced mutagenesis and translesion synthesis (TLS). It is not the major replicative DNA polymerase. The protein is Error-prone DNA polymerase of Mycolicibacterium paratuberculosis (strain ATCC BAA-968 / K-10) (Mycobacterium paratuberculosis).